The chain runs to 133 residues: p53 and DNA damage-regulated protein 1 (133 aa).

The protein belongs to the prefoldin subunit beta family. In terms of assembly, component of the PAQosome complex which is responsible for the biogenesis of several protein complexes and which consists of R2TP complex members RUVBL1, RUVBL2, RPAP3 and PIH1D1, URI complex members PFDN2, PFDN6, PDRG1, UXT and URI1 as well as ASDURF, POLR2E and DNAAF10/WDR92.

Its subcellular location is the cytoplasm. Functionally, may play a role in chaperone-mediated protein folding. The sequence is that of p53 and DNA damage-regulated protein 1 (Pdrg1) from Rattus norvegicus (Rat).